Reading from the N-terminus, the 199-residue chain is COMM domain-containing protein 2 (199 aa).

The 68-residue stretch at 123-190 (SYHNLEWRLD…QALEEMKTNH (68 aa)) folds into the COMM domain.

Belongs to the COMM domain-containing protein 2 family. In terms of assembly, component of the commander complex consisting of the CCC subcomplex and the retriever subcomplex. Component of the CCC (COMMD/CCDC22/CCDC93) subcomplex consisting of COMMD1, COMMD2, COMMD3, COMMD4, COMMD5, COMMD6, COMMD7, COMMD8, COMMD9, COMMD10, CCDC22 and CCDC93; within the complex forms a heterodimer with COMMD3. Interacts with RELA, RELB, NFKB1/p105, NFKB2/p100. Interacts with CCDC22, CCDC93, SCNN1B, CUL3, CUL4B, CUL5, CUL7. Ubiquitous.

The protein resides in the cytoplasm. Scaffold protein in the commander complex that is essential for endosomal recycling of transmembrane cargos; the commander complex is composed of the CCC subcomplex and the retriever subcomplex. May modulate activity of cullin-RING E3 ubiquitin ligase (CRL) complexes. May down-regulate activation of NF-kappa-B. In Homo sapiens (Human), this protein is COMM domain-containing protein 2 (COMMD2).